We begin with the raw amino-acid sequence, 303 residues long: N-acetyl-D-glucosamine kinase (303 aa).

Residues 4–11 and 133–140 each bind ATP; these read GFDIGGTK and GVGGGLVL. Positions 157, 177, 179, and 184 each coordinate Zn(2+).

This sequence belongs to the ROK (NagC/XylR) family. NagK subfamily.

The catalysed reaction is N-acetyl-D-glucosamine + ATP = N-acetyl-D-glucosamine 6-phosphate + ADP + H(+). It participates in cell wall biogenesis; peptidoglycan recycling. Its function is as follows. Catalyzes the phosphorylation of N-acetyl-D-glucosamine (GlcNAc) derived from cell-wall degradation, yielding GlcNAc-6-P. This is N-acetyl-D-glucosamine kinase from Salmonella choleraesuis (strain SC-B67).